The chain runs to 730 residues: Elongation factor 2 (730 aa).

In terms of domain architecture, tr-type G spans 19–228 (QRIRNIGIVA…TGVSFKDVYD (210 aa)). GTP-binding positions include 28-35 (AHIDHGKT), 94-98 (DTPGH), and 148-151 (NKVD). H596 is modified (diphthamide).

The protein belongs to the TRAFAC class translation factor GTPase superfamily. Classic translation factor GTPase family. EF-G/EF-2 subfamily.

It localises to the cytoplasm. In terms of biological role, catalyzes the GTP-dependent ribosomal translocation step during translation elongation. During this step, the ribosome changes from the pre-translocational (PRE) to the post-translocational (POST) state as the newly formed A-site-bound peptidyl-tRNA and P-site-bound deacylated tRNA move to the P and E sites, respectively. Catalyzes the coordinated movement of the two tRNA molecules, the mRNA and conformational changes in the ribosome. This is Elongation factor 2 from Methanosarcina acetivorans (strain ATCC 35395 / DSM 2834 / JCM 12185 / C2A).